The following is a 375-amino-acid chain: STAGKVIKCKAAVLWEANKPFSLEEVEVAPPKAHEVRIKIVATGICRSDDHVVTGALAMPFPVILGHEAAGVVESVGEKVTLLKPGDAVIPLFVPQCGECRSCLSTKGNLCIKNDLSSSPTGLMADGTTRFTCKGKAIHHFIGTSTFTEYTVVHETAAAKIDSAAPLEKVCLIGCGFSTGYGAVLQTAKVEPGSTCAVFGLGGVGLSVVMGCKAAGASRIIAIDINKDKFAKAKELGATECVNPKDFKKPIHEVLTEMTGKGVDYSFEVIGRIETMTEALASCHYNYGVSVIVGVPPAAQKISFDPMLIFSGRTWKGSVFGGWKSKDAVPKLVADYMKKKFVLDPLITHTLPFTKINEGFDLLRTGKSIRTVLVL.

Position 1 is an N-acetylserine (serine 1). The Zn(2+) site is built by cysteine 46, histidine 67, cysteine 97, cysteine 100, cysteine 103, cysteine 111, and cysteine 175. Residues 200–205 (GLGGVG), aspartate 224, lysine 229, 293–295 (VGV), and arginine 370 contribute to the NAD(+) site.

This sequence belongs to the zinc-containing alcohol dehydrogenase family. Class-I subfamily. Homodimer. Requires Zn(2+) as cofactor.

The protein localises to the cytoplasm. It catalyses the reaction a primary alcohol + NAD(+) = an aldehyde + NADH + H(+). It carries out the reaction a secondary alcohol + NAD(+) = a ketone + NADH + H(+). The sequence is that of Alcohol dehydrogenase 1 (ADH1) from Coturnix japonica (Japanese quail).